We begin with the raw amino-acid sequence, 455 residues long: Probable pectate lyase 6 (455 aa).

The first 25 residues, Met1–Ala25, serve as a signal peptide directing secretion. Asn55 and Asn75 each carry an N-linked (GlcNAc...) asparagine glycan. The Ca(2+) site is built by Asp247, Asp271, and Asp275. Arg327 is an active-site residue.

This sequence belongs to the polysaccharide lyase 1 family. The cofactor is Ca(2+).

The catalysed reaction is Eliminative cleavage of (1-&gt;4)-alpha-D-galacturonan to give oligosaccharides with 4-deoxy-alpha-D-galact-4-enuronosyl groups at their non-reducing ends.. The protein operates within glycan metabolism; pectin degradation; 2-dehydro-3-deoxy-D-gluconate from pectin: step 2/5. The chain is Probable pectate lyase 6 from Arabidopsis thaliana (Mouse-ear cress).